The following is a 948-amino-acid chain: MNTHSDFASRHIGPQGEERREMLDSLGYRTLDELIADIVPADIRMKAPLDLPAAKSETEALEELRSILRKNKLLKTFIGQGYYGTITPSVILRNVLENPGWYTAYTPYQPEIAQGRLEMLMNFQTMVSSLTGLPVANASLLDEGTAAAEAVTMCRNARPKANTFFVADTCHPQTISVIRTRAAFQGVNIIVGDCSSFDPASIGADLAGVLVQYPDTLGRICDYTDFFSRVHATGALCVVAADLMALTVIREPGAFGADICIGNTQHFGIPMGFGGPHAAYMSCTDALKRRMPGRLIGMSIDTLGRPAYRLALQTREQHIRRDKATSNICTAQVLLAVLAAFYAVYHGQEGLKRIGTEIHLKTKSLYKALTEAGIAIENKNFFDTLLLSVPGQADAMVQKALEAGYNIRRVDADHAAISLDETATCADIAALASALAGAETSAACDCDAPAWDPVHTRQTPFCTEKAFNSYHSETEMMRYIRRLESRDLALNEAMIPLGSCTMKLNAASEMIPITWPEANSLHPFVPADQSEGIREMLSILSDRLAKITGFAAVSLQPNAGAAGEYAGLLAIRRYQKHAGEGHRNVCLIPTSAHGTNPASSAMAGLKVVPVKCDERGNIDMADLKSQAEAHKDNLSCIMVTYPSTHGVYEQTIKELCDIVHANGGQVYMDGANMNAQVGLTCPGCIGADVCHLNLHKTFAMPHGGGGPGIGPIGVAEHLVPFLPGHLTLGHEEGAVASAAWGSASIAAICWMYLSMMGPDGLREATEMAILNANYIAKKLGHLFPVLYSGNKGLVAHECILDPRQLTHDAGLTVDDIAKRLMDYGFHGPTMSFPVPGTLMVEPTESEPKKELDRFIEAMERIHAEITAIINGTADKEDNVLKNSPHTAEMVSADEWRHPYSRSEAAYPVSGLLIHKFWPYVGRVDNVYGDRNLVCTCDTVEEFSKAVEL.

At lysine 696 the chain carries N6-(pyridoxal phosphate)lysine.

Belongs to the GcvP family. As to quaternary structure, the glycine cleavage system is composed of four proteins: P, T, L and H. It depends on pyridoxal 5'-phosphate as a cofactor.

The enzyme catalyses N(6)-[(R)-lipoyl]-L-lysyl-[glycine-cleavage complex H protein] + glycine + H(+) = N(6)-[(R)-S(8)-aminomethyldihydrolipoyl]-L-lysyl-[glycine-cleavage complex H protein] + CO2. In terms of biological role, the glycine cleavage system catalyzes the degradation of glycine. The P protein binds the alpha-amino group of glycine through its pyridoxal phosphate cofactor; CO(2) is released and the remaining methylamine moiety is then transferred to the lipoamide cofactor of the H protein. The polypeptide is Glycine dehydrogenase (decarboxylating) (Akkermansia muciniphila (strain ATCC BAA-835 / DSM 22959 / JCM 33894 / BCRC 81048 / CCUG 64013 / CIP 107961 / Muc)).